A 232-amino-acid polypeptide reads, in one-letter code: Phosphatidylserine decarboxylase proenzyme (232 aa).

Ser190 acts as the Schiff-base intermediate with substrate; via pyruvic acid in catalysis. Position 190 is a pyruvic acid (Ser); by autocatalysis (Ser190).

Belongs to the phosphatidylserine decarboxylase family. PSD-A subfamily. In terms of assembly, heterodimer of a large membrane-associated beta subunit and a small pyruvoyl-containing alpha subunit. Requires pyruvate as cofactor. Post-translationally, is synthesized initially as an inactive proenzyme. Formation of the active enzyme involves a self-maturation process in which the active site pyruvoyl group is generated from an internal serine residue via an autocatalytic post-translational modification. Two non-identical subunits are generated from the proenzyme in this reaction, and the pyruvate is formed at the N-terminus of the alpha chain, which is derived from the carboxyl end of the proenzyme. The post-translation cleavage follows an unusual pathway, termed non-hydrolytic serinolysis, in which the side chain hydroxyl group of the serine supplies its oxygen atom to form the C-terminus of the beta chain, while the remainder of the serine residue undergoes an oxidative deamination to produce ammonia and the pyruvoyl prosthetic group on the alpha chain.

It is found in the cell membrane. It carries out the reaction a 1,2-diacyl-sn-glycero-3-phospho-L-serine + H(+) = a 1,2-diacyl-sn-glycero-3-phosphoethanolamine + CO2. The protein operates within phospholipid metabolism; phosphatidylethanolamine biosynthesis; phosphatidylethanolamine from CDP-diacylglycerol: step 2/2. Catalyzes the formation of phosphatidylethanolamine (PtdEtn) from phosphatidylserine (PtdSer). The polypeptide is Phosphatidylserine decarboxylase proenzyme (Brucella anthropi (strain ATCC 49188 / DSM 6882 / CCUG 24695 / JCM 21032 / LMG 3331 / NBRC 15819 / NCTC 12168 / Alc 37) (Ochrobactrum anthropi)).